A 586-amino-acid polypeptide reads, in one-letter code: Actin-related protein 9 (586 aa).

The disordered stretch occupies residues 141–169; it reads STPIVDKDADVDPLQRSTPDDTEPNSEEN.

The protein belongs to the actin family. ARP8 subfamily.

The chain is Actin-related protein 9 (ARP9) from Oryza sativa subsp. indica (Rice).